A 608-amino-acid chain; its full sequence is Putative pentatricopeptide repeat-containing protein At1g16830 (608 aa).

PPR repeat units follow at residues 107 to 141 (KPRVFLLLLEIFWRGHIYDKAIEVYTGMSSFGFVP), 142 to 172 (NTRAMNMMMDVNFKLNVVNGALEIFEGIRFR), 173 to 210 (NFFSFDIALSHFCSRGGRGDLVGVKIVLKRMIGEGFYP), 211 to 245 (NRERFGQILRLCCRTGCVSEAFQVVGLMICSGISV), 246 to 280 (SVNVWSMLVSGFFRSGEPQKAVDLFNKMIQIGCSP), 281 to 315 (NLVTYTSLIKGFVDLGMVDEAFTVLSKVQSEGLAP), 316 to 350 (DIVLCNLMIHTYTRLGRFEEARKVFTSLEKRKLVP), 351 to 381 (DQYTFASILSSLCLSGKFDLVPRITHGIGTD), 383 to 417 (DLVTGNLLSNCFSKIGYNSYALKVLSIMSYKDFAL), 418 to 452 (DCYTYTVYLSALCRGGAPRAAIKMYKIIIKEKKHL), 453 to 487 (DAHFHSAIIDSLIELGKYNTAVHLFKRCILEKYPL), 488 to 522 (DVVSYTVAIKGLVRAKRIEEAYSLCCDMKEGGIYP), and 523 to 557 (NRRTYRTIISGLCKEKETEKVRKILRECIQEGVEL).

This sequence belongs to the PPR family. P subfamily.

The polypeptide is Putative pentatricopeptide repeat-containing protein At1g16830 (Arabidopsis thaliana (Mouse-ear cress)).